Here is a 216-residue protein sequence, read N- to C-terminus: Adenylate kinase (216 aa).

10–15 contacts ATP; it reads GAGKGT. The tract at residues 30–59 is NMP; it reads STGDIFRAHMSQGTPLGKLAKEYVDAGKYV. AMP-binding positions include Thr-31, Arg-36, 57–59, 85–88, and Gln-92; these read KYV and GYPR. An LID region spans residues 126–163; sequence GRRVCRSCGATYHVRFNPPREAGRCDRCGGELYQRSDD. ATP is bound at residue Arg-127. Residues Cys-130 and Cys-133 each contribute to the Zn(2+) site. 136–137 provides a ligand contact to ATP; it reads TY. Positions 150 and 153 each coordinate Zn(2+). Arg-160 and Arg-171 together coordinate AMP. Gln-199 serves as a coordination point for ATP.

The protein belongs to the adenylate kinase family. Monomer.

The protein resides in the cytoplasm. It carries out the reaction AMP + ATP = 2 ADP. It functions in the pathway purine metabolism; AMP biosynthesis via salvage pathway; AMP from ADP: step 1/1. In terms of biological role, catalyzes the reversible transfer of the terminal phosphate group between ATP and AMP. Plays an important role in cellular energy homeostasis and in adenine nucleotide metabolism. The protein is Adenylate kinase of Symbiobacterium thermophilum (strain DSM 24528 / JCM 14929 / IAM 14863 / T).